We begin with the raw amino-acid sequence, 289 residues long: ATP synthase gamma chain (289 aa).

It belongs to the ATPase gamma chain family. In terms of assembly, F-type ATPases have 2 components, CF(1) - the catalytic core - and CF(0) - the membrane proton channel. CF(1) has five subunits: alpha(3), beta(3), gamma(1), delta(1), epsilon(1). CF(0) has three main subunits: a, b and c.

The protein resides in the cell inner membrane. Functionally, produces ATP from ADP in the presence of a proton gradient across the membrane. The gamma chain is believed to be important in regulating ATPase activity and the flow of protons through the CF(0) complex. This is ATP synthase gamma chain from Polynucleobacter asymbioticus (strain DSM 18221 / CIP 109841 / QLW-P1DMWA-1) (Polynucleobacter necessarius subsp. asymbioticus).